The chain runs to 623 residues: Keratin, type I cytoskeletal 9 (623 aa).

Residues methionine 1–arginine 13 are compositionally biased toward low complexity. Residues methionine 1–glycine 25 form a disordered region. Residues methionine 1–asparagine 152 are head. 2 positions are modified to phosphoserine: serine 14 and serine 57. Positions serine 14–glycine 25 are enriched in gly residues. Residues glutamate 153 to tryptophan 188 form a coil 1A region. The IF rod domain maps to glutamate 153–phenylalanine 465. Positions tyrosine 189–threonine 207 are linker 1. Residues isoleucine 208–leucine 299 form a coil 1B region. Residues threonine 300–threonine 322 are linker 12. The segment at leucine 323–glycine 461 is coil 2. Disordered stretches follow at residues glutamine 462–serine 496 and tyrosine 534–serine 623. Residues glutamine 462–serine 623 form a tail region. Gly residues predominate over residues glycine 471–serine 496.

It belongs to the intermediate filament family. As to quaternary structure, heterotetramer of two type I and two type II keratins. Expressed in the terminally differentiated epidermis of palms and soles.

In terms of biological role, may serve an important special function either in the mature palmar and plantar skin tissue or in the morphogenetic program of the formation of these tissues. Plays a role in keratin filament assembly. This Homo sapiens (Human) protein is Keratin, type I cytoskeletal 9 (KRT9).